The primary structure comprises 439 residues: Histidinol dehydrogenase (439 aa).

NAD(+) is bound by residues Tyr-129, Gln-193, and Asn-222. Residues Thr-245, Gln-267, and His-270 each coordinate substrate. Zn(2+) is bound by residues Gln-267 and His-270. Active-site proton acceptor residues include Glu-336 and His-337. Residues His-337, Asp-370, Glu-424, and His-429 each contribute to the substrate site. Asp-370 contacts Zn(2+). His-429 contacts Zn(2+).

The protein belongs to the histidinol dehydrogenase family. Zn(2+) serves as cofactor.

It carries out the reaction L-histidinol + 2 NAD(+) + H2O = L-histidine + 2 NADH + 3 H(+). It functions in the pathway amino-acid biosynthesis; L-histidine biosynthesis; L-histidine from 5-phospho-alpha-D-ribose 1-diphosphate: step 9/9. In terms of biological role, catalyzes the sequential NAD-dependent oxidations of L-histidinol to L-histidinaldehyde and then to L-histidine. In Cutibacterium acnes (strain DSM 16379 / KPA171202) (Propionibacterium acnes), this protein is Histidinol dehydrogenase.